Consider the following 104-residue polypeptide: Large ribosomal subunit protein bL21 (104 aa).

Belongs to the bacterial ribosomal protein bL21 family. In terms of assembly, part of the 50S ribosomal subunit. Contacts protein L20.

This protein binds to 23S rRNA in the presence of protein L20. This chain is Large ribosomal subunit protein bL21, found in Leptospira borgpetersenii serovar Hardjo-bovis (strain JB197).